The sequence spans 412 residues: L-threonine:uridine-5'-aldehyde transaldolase (412 aa).

K229 is modified (N6-(pyridoxal phosphate)lysine).

It belongs to the SHMT family. It depends on pyridoxal 5'-phosphate as a cofactor.

It catalyses the reaction uridine-5'-aldehyde + L-threonine = (5'S,6'S)-C-glycyluridine + acetaldehyde. It functions in the pathway antibiotic biosynthesis. Functionally, transaldolase involved in the biosynthesis of the capuramycin-type nucleoside antibiotic A-102395. Catalyzes the condensation of L-threonine and uridine-5'-aldehyde to form 5'-C-glycyluridine (GlyU). The protein is L-threonine:uridine-5'-aldehyde transaldolase of Amycolatopsis sp.